The primary structure comprises 691 residues: Alpha-1,4-glucan:maltose-1-phosphate maltosyltransferase (691 aa).

Alpha-maltose 1-phosphate-binding residues include Lys-280, Gln-341, and Asp-376. Residue Asp-411 is the Nucleophile of the active site. Asn-412 serves as a coordination point for alpha-maltose 1-phosphate. The active-site Proton donor is Glu-440. Position 550 to 551 (Lys-550 to Tyr-551) interacts with alpha-maltose 1-phosphate.

This sequence belongs to the glycosyl hydrolase 13 family. GlgE subfamily. Homodimer.

The enzyme catalyses alpha-maltose 1-phosphate + [(1-&gt;4)-alpha-D-glucosyl](n) = [(1-&gt;4)-alpha-D-glucosyl](n+2) + phosphate. Maltosyltransferase that uses maltose 1-phosphate (M1P) as the sugar donor to elongate linear or branched alpha-(1-&gt;4)-glucans. Is involved in a branched alpha-glucan biosynthetic pathway from trehalose, together with TreS, Mak and GlgB. The protein is Alpha-1,4-glucan:maltose-1-phosphate maltosyltransferase of Arcanobacterium haemolyticum (strain ATCC 9345 / DSM 20595 / CCM 5947 / CCUG 17215 / LMG 16163 / NBRC 15585 / NCTC 8452 / 11018).